The chain runs to 590 residues: uncharacterized protein (590 aa).

Disordered regions lie at residues I306–Y329 and Q528–L590. The segment covering P543–T563 has biased composition (pro residues).

This is an uncharacterized protein from Ictaluridae (bullhead catfishes).